Reading from the N-terminus, the 292-residue chain is Large ribosomal subunit protein uL4 (292 aa).

2 stretches are compositionally biased toward basic and acidic residues: residues methionine 1–alanine 33 and lysine 42–proline 51. Disordered stretches follow at residues methionine 1 to serine 59 and glycine 132 to alanine 158.

It belongs to the universal ribosomal protein uL4 family. As to quaternary structure, part of the 50S ribosomal subunit.

Its function is as follows. One of the primary rRNA binding proteins, this protein initially binds near the 5'-end of the 23S rRNA. It is important during the early stages of 50S assembly. It makes multiple contacts with different domains of the 23S rRNA in the assembled 50S subunit and ribosome. In terms of biological role, forms part of the polypeptide exit tunnel. The sequence is that of Large ribosomal subunit protein uL4 from Mycoplasmopsis pulmonis (strain UAB CTIP) (Mycoplasma pulmonis).